Here is a 348-residue protein sequence, read N- to C-terminus: Anthranilate phosphoribosyltransferase (348 aa).

5-phospho-alpha-D-ribose 1-diphosphate contacts are provided by residues G80, 83–84, T88, 90–93, 108–116, and S120; these read GD, NVST, and KHGNRSVSS. G80 lines the anthranilate pocket. S92 contacts Mg(2+). An anthranilate-binding site is contributed by N111. R166 is a binding site for anthranilate. Residues D224 and E225 each contribute to the Mg(2+) site.

It belongs to the anthranilate phosphoribosyltransferase family. As to quaternary structure, homodimer. Requires Mg(2+) as cofactor.

It catalyses the reaction N-(5-phospho-beta-D-ribosyl)anthranilate + diphosphate = 5-phospho-alpha-D-ribose 1-diphosphate + anthranilate. Its pathway is amino-acid biosynthesis; L-tryptophan biosynthesis; L-tryptophan from chorismate: step 2/5. In terms of biological role, catalyzes the transfer of the phosphoribosyl group of 5-phosphorylribose-1-pyrophosphate (PRPP) to anthranilate to yield N-(5'-phosphoribosyl)-anthranilate (PRA). The protein is Anthranilate phosphoribosyltransferase of Sorangium cellulosum (strain So ce56) (Polyangium cellulosum (strain So ce56)).